The following is a 326-amino-acid chain: Fructokinase (326 aa).

Positions 275–326 are disordered; the sequence is EQALRNGPDPRRQSRRRHRLPRRRQSTLGARDWSLRLEQDSDPHPPDDTFSP. A compositionally biased stretch (basic residues) spans 287–299; sequence QSRRRHRLPRRRQ. Over residues 307-326 the composition is skewed to basic and acidic residues; sequence WSLRLEQDSDPHPPDDTFSP.

The protein belongs to the carbohydrate kinase PfkB family.

It catalyses the reaction D-fructose + ATP = D-fructose 6-phosphate + ADP + H(+). The sequence is that of Fructokinase (frk) from Rhizobium leguminosarum bv. trifolii.